The following is a 790-amino-acid chain: E3 ubiquitin-protein ligase Jade-2 (790 aa).

Disordered stretches follow at residues 1–52 (MEEK…PSEV) and 111–130 (GPPA…SQPD). A phosphoserine mark is found at serine 9 and serine 15. The segment covering 9-28 (SISSDNSDTTDSHATSTSAS) has biased composition (low complexity). N6-acetyllysine occurs at positions 32 and 38. At serine 117 the chain carries Phosphoserine. The segment at 199-249 (DVVCDVCRSPEGEDGNEMVFCDKCNVCVHQACYGILKVPTGSWLCRTCALG) adopts a PHD-type 1 zinc-finger fold. Residues 251 to 285 (QPKCLLCPKRGGALKPTRSGTKWVHVSCALWIPEV) form a C2HC pre-PHD-type zinc finger. Lysine 298 is modified (N6-acetyllysine). A PHD-type 2 zinc finger spans residues 309-365 (LSCSLCKECTGTCIQCSMPSCVTAFHVTCAFDHGLEMRTILADNDEVKFKSFCQEHS). Disordered stretches follow at residues 361 to 386 (CQEH…AGED) and 578 to 777 (SFMR…PREA). Positions 372 to 381 (EPTSEPTEPS) are enriched in polar residues. Basic residues predominate over residues 593–606 (KARGRTRLPAKKKP). Positions 684–693 (AASVAADSDV) are enriched in low complexity. Over residues 737 to 747 (ERPKVSLHFDT) the composition is skewed to basic and acidic residues. Positions 757-767 (EMSDSDVEAED) are enriched in acidic residues.

This sequence belongs to the JADE family. In terms of assembly, component of the HBO1 complex composed at least of ING4 or ING5, MYST2/HBO1, MEAF6, and one of JADE1, JADE2 and JADE3. Interacts (via C-terminus) with KDM1A (via AOD/Tower domain).

It catalyses the reaction S-ubiquitinyl-[E2 ubiquitin-conjugating enzyme]-L-cysteine + [acceptor protein]-L-lysine = [E2 ubiquitin-conjugating enzyme]-L-cysteine + N(6)-ubiquitinyl-[acceptor protein]-L-lysine.. It functions in the pathway protein modification; protein ubiquitination. Functionally, scaffold subunit of some HBO1 complexes, which have a histone H4 acetyltransferase activity. Acts as an E3 ubiquitin-protein ligase mediating the ubiquitination and subsequent proteasomal degradation of target protein histone demethylase KDM1A. Also acts as a ubiquitin ligase E3 toward itself. Positive regulator of neurogenesis. This Homo sapiens (Human) protein is E3 ubiquitin-protein ligase Jade-2 (JADE2).